The sequence spans 485 residues: Glutamate--tRNA ligase (485 aa).

The 'HIGH' region motif lies at Pro-10 to Asn-20. A 'KMSKS' region motif is present at residues Lys-253 to Arg-257. Lys-256 is an ATP binding site.

It belongs to the class-I aminoacyl-tRNA synthetase family. Glutamate--tRNA ligase type 1 subfamily. Monomer.

The protein resides in the cytoplasm. It catalyses the reaction tRNA(Glu) + L-glutamate + ATP = L-glutamyl-tRNA(Glu) + AMP + diphosphate. Catalyzes the attachment of glutamate to tRNA(Glu) in a two-step reaction: glutamate is first activated by ATP to form Glu-AMP and then transferred to the acceptor end of tRNA(Glu). The protein is Glutamate--tRNA ligase of Enterococcus faecalis (strain ATCC 700802 / V583).